The sequence spans 214 residues: UPF0725 protein At1g19565 (214 aa).

The interval 56-92 (EEEYEPSLPSSESPTDSCHADHESPDSPKYQQPAPGE) is disordered.

This sequence belongs to the UPF0725 (EMB2204) family.

The polypeptide is UPF0725 protein At1g19565 (Arabidopsis thaliana (Mouse-ear cress)).